Consider the following 627-residue polypeptide: 1-deoxy-D-xylulose-5-phosphate synthase (627 aa).

Residues H87 and G128–S130 contribute to the thiamine diphosphate site. D159 serves as a coordination point for Mg(2+). Thiamine diphosphate contacts are provided by residues G160–A161, N188, F295, and E375. N188 is a binding site for Mg(2+).

The protein belongs to the transketolase family. DXPS subfamily. In terms of assembly, homodimer. It depends on Mg(2+) as a cofactor. Thiamine diphosphate serves as cofactor.

The enzyme catalyses D-glyceraldehyde 3-phosphate + pyruvate + H(+) = 1-deoxy-D-xylulose 5-phosphate + CO2. The protein operates within metabolic intermediate biosynthesis; 1-deoxy-D-xylulose 5-phosphate biosynthesis; 1-deoxy-D-xylulose 5-phosphate from D-glyceraldehyde 3-phosphate and pyruvate: step 1/1. Catalyzes the acyloin condensation reaction between C atoms 2 and 3 of pyruvate and glyceraldehyde 3-phosphate to yield 1-deoxy-D-xylulose-5-phosphate (DXP). This chain is 1-deoxy-D-xylulose-5-phosphate synthase, found in Pseudomonas paraeruginosa (strain DSM 24068 / PA7) (Pseudomonas aeruginosa (strain PA7)).